The chain runs to 198 residues: Na(+)-translocating NADH-quinone reductase subunit E (198 aa).

Helical transmembrane passes span 11–31 (AVFV…FLAV), 35–55 (VSTA…SVPA), 77–97 (FLNF…LEMI), 109–129 (LGIF…VSFM), 140–160 (IVYG…LAGI), and 176–196 (LGIT…FSGV).

The protein belongs to the NqrDE/RnfAE family. In terms of assembly, composed of six subunits; NqrA, NqrB, NqrC, NqrD, NqrE and NqrF.

The protein resides in the cell inner membrane. It catalyses the reaction a ubiquinone + n Na(+)(in) + NADH + H(+) = a ubiquinol + n Na(+)(out) + NAD(+). In terms of biological role, NQR complex catalyzes the reduction of ubiquinone-1 to ubiquinol by two successive reactions, coupled with the transport of Na(+) ions from the cytoplasm to the periplasm. NqrA to NqrE are probably involved in the second step, the conversion of ubisemiquinone to ubiquinol. The sequence is that of Na(+)-translocating NADH-quinone reductase subunit E from Yersinia enterocolitica serotype O:8 / biotype 1B (strain NCTC 13174 / 8081).